We begin with the raw amino-acid sequence, 479 residues long: ATP-dependent RNA helicase DDX19B (479 aa).

An N-acetylalanine modification is found at A2. The interval 2–300 is N-terminal lobe; the sequence is ATDSWALAVD…DPNVIKLKRE (299 aa). The interval 34 to 54 is disordered; sequence TNGAVVKTNANAEKTDEEEKE. The segment at 55-68 is N-terminal helix; it reads DRAAQSLLNKLIRS. The Q motif signature appears at 92 to 120; sequence KSFEELRLKPQLLQGVYAMGFNRPSKIQE. ATP-binding positions include Q119 and 138 to 145; that span reads SQSGTGKT. One can recognise a Helicase ATP-binding domain in the interval 125 to 295; that stretch reads LMLAEPPQNL…QKVVPDPNVI (171 aa). The DEAD box motif lies at 242-245; sequence DEAD. Positions 301-479 are C-terminal lobe; that stretch reads EETLDTIKQY…DLDEIEKIAN (179 aa). The Helicase C-terminal domain maps to 306-474; it reads TIKQYYVLCS…RLDTDDLDEI (169 aa). R429 and R432 together coordinate ATP.

This sequence belongs to the DEAD box helicase family. DDX19/DBP5 subfamily. Associates with the nuclear pore complex via interaction with NUP214. Interacts with NUP214 or RNA in a mutually exclusive manner.

The protein resides in the cytoplasm. Its subcellular location is the nucleus. It localises to the nucleoplasm. The catalysed reaction is ATP + H2O = ADP + phosphate + H(+). In terms of biological role, ATP-dependent RNA helicase involved in mRNA export from the nucleus. Rather than unwinding RNA duplexes, DDX19B functions as a remodeler of ribonucleoprotein particles, whereby proteins bound to nuclear mRNA are dissociated and replaced by cytoplasmic mRNA binding proteins. This chain is ATP-dependent RNA helicase DDX19B (DDX19B), found in Homo sapiens (Human).